A 1188-amino-acid chain; its full sequence is Probable RNA helicase armi (1188 aa).

723–730 (GPPGSGKT) lines the ATP pocket. Positions 862–865 (DEAG) match the DEAG box motif.

It belongs to the DNA2/NAM7 helicase family. SDE3 subfamily. Forms a complex with piwi and fs(1)Yb; this interaction is required for proper piRNA loading and nuclear localization of piwi. The interaction of piwi and fs(1)Yb is likely to occur via armi. As to expression, abundant in oocytes and syncytial blastoderm. Expressed at low level throughout development, including somatic tissues. First apparent early in oogenesis, in the cytoplasm of stem cells and mitotically dividing cystoblasts. In regions 2a and 2b of the germarium, it is most concentrated in the center of the germline cysts, where the pro-oocyte is located. In stage 1 and early stage 2 egg chambers, it accumulates at the anterior of the oocyte, near the ring canals. It also extends through the ring canals forming a branched structure that links the early oocyte with adjacent nurse cells. In stage 3 cysts, it accumulates at the posterior cortex and localizes to extensions that pass through the oocyte into the nurse cells. Through stages 4 to 7, it continues to be somewhat enriched at the posterior cortex of the oocyte, but at significantly lower level. In stage 9 to 10 egg chambers, it is found throughout the cytoplasm of the oocyte and nurse cells, with slight enrichment at the oocyte cortex.

The protein localises to the cytoplasm. The enzyme catalyses ATP + H2O = ADP + phosphate + H(+). In terms of biological role, probable RNA helicase required for axial polarization of the oocyte during early and mid oogenesis. Plays a central role in RNA interference (RNAi) process, a process that mediates mRNA destruction of translational repression. Required for the assembly of the RISC complex, a complex required for target RNA destruction or repression. May be required in the RISC assembly to unwind miRNAs, in the production of single-stranded miRNA from the double-stranded miRNA, a key step in RISC formation. Required both for the translational control of oskar (osk) mRNA and cytoskeletal polarization in the oocyte. Required for somatic primary piRNA biogenesis. Involved in repression of long interspersed nuclear elements (LINEs) including HeT-A, I-element and TART LINEs. The sequence is that of Probable RNA helicase armi from Drosophila melanogaster (Fruit fly).